A 607-amino-acid polypeptide reads, in one-letter code: LRR receptor kinase SERK2 (607 aa).

The N-terminal stretch at 1 to 21 (MRELRVAVLIIAVSLPSFSAS) is a signal peptide. The Extracellular portion of the chain corresponds to 22–219 (DRQGDALYDM…QSGSHSSKIG (198 aa)). N-linked (GlcNAc...) asparagine glycosylation is found at asparagine 36 and asparagine 110. LRR repeat units follow at residues 87–110 (LKYL…QFGN), 111–135 (LSSL…LGQL), 136–159 (SKLQ…LAKI), and 160–183 (SSLT…LFQV). N-linked (GlcNAc...) asparagine glycans are attached at residues asparagine 149, asparagine 171, asparagine 187, and asparagine 206. A helical membrane pass occupies residues 220–240 (IVLGTVGGVIGLLIVAALFLF). At 241-607 (CKGRRKSHLR…QEAIELSGGR (367 aa)) the chain is on the cytoplasmic side. Residues 284–563 (FSERNVLGQG…VVRMLEGEGL (280 aa)) form the Protein kinase domain. ATP is bound by residues 290-298 (LGQGGFGKV) and lysine 312. Residue aspartate 411 is the Proton acceptor of the active site.

The protein belongs to the protein kinase superfamily. Ser/Thr protein kinase family.

The protein resides in the cell membrane. It carries out the reaction L-seryl-[protein] + ATP = O-phospho-L-seryl-[protein] + ADP + H(+). The catalysed reaction is L-threonyl-[protein] + ATP = O-phospho-L-threonyl-[protein] + ADP + H(+). In terms of biological role, may be involved in the regulation of plant growth through the brassinosteroid (BR) signaling pathway. This Oryza sativa subsp. japonica (Rice) protein is LRR receptor kinase SERK2.